A 292-amino-acid polypeptide reads, in one-letter code: Elongation factor Ts (292 aa).

The tract at residues 82 to 85 (TDFV) is involved in Mg(2+) ion dislocation from EF-Tu.

It belongs to the EF-Ts family.

It is found in the cytoplasm. In terms of biological role, associates with the EF-Tu.GDP complex and induces the exchange of GDP to GTP. It remains bound to the aminoacyl-tRNA.EF-Tu.GTP complex up to the GTP hydrolysis stage on the ribosome. The protein is Elongation factor Ts of Bordetella bronchiseptica (strain ATCC BAA-588 / NCTC 13252 / RB50) (Alcaligenes bronchisepticus).